Reading from the N-terminus, the 62-residue chain is Chromatin protein Cren7 (62 aa).

It belongs to the Cren7 family. In terms of assembly, monomer. Methylated at multiple sites, to varying extents.

The protein localises to the chromosome. Its subcellular location is the cytoplasm. Functionally, a chromatin protein, binds double-stranded DNA without sequence specificity. Constrains negative DNA supercoils. This chain is Chromatin protein Cren7, found in Staphylothermus marinus (strain ATCC 43588 / DSM 3639 / JCM 9404 / F1).